The chain runs to 299 residues: Probable 3-hydroxyisobutyrate dehydrogenase-like 2, mitochondrial (299 aa).

NAD(+) is bound by residues 14–43 (TRIG…TVYA) and Ser-108. Residue Lys-182 is part of the active site. Lys-250 is a binding site for NAD(+).

Belongs to the HIBADH-related family. 3-hydroxyisobutyrate dehydrogenase subfamily.

The protein resides in the mitochondrion. The enzyme catalyses 3-hydroxy-2-methylpropanoate + NAD(+) = 2-methyl-3-oxopropanoate + NADH + H(+). The protein operates within amino-acid degradation; L-valine degradation. This is Probable 3-hydroxyisobutyrate dehydrogenase-like 2, mitochondrial from Arabidopsis thaliana (Mouse-ear cress).